A 226-amino-acid polypeptide reads, in one-letter code: MISSHPEIELAGFIEQTCLKPTATADDVRQMCWEAQRYRFAAVCVAPVYAPLAVELLHKQKPQVFTVVGFPLGLATAPCKLFEAQEAAARGVTGLEVMVNLGAIKSGHYNAIYEELGQIVDAVGCEVRAILELNLLDATERRHVAEVCLDVGVTALKTSAGWSGPVRPEDILGLRRILRNQLGIKVAGGIHTLNQALELLAAGANRLGTGRGVEILREQHALGKTA.

The active-site Proton donor/acceptor is Glu-96. Lys-157 serves as the catalytic Schiff-base intermediate with acetaldehyde. Lys-185 functions as the Proton donor/acceptor in the catalytic mechanism.

The protein belongs to the DeoC/FbaB aldolase family. DeoC type 1 subfamily.

The protein localises to the cytoplasm. The catalysed reaction is 2-deoxy-D-ribose 5-phosphate = D-glyceraldehyde 3-phosphate + acetaldehyde. The protein operates within carbohydrate degradation; 2-deoxy-D-ribose 1-phosphate degradation; D-glyceraldehyde 3-phosphate and acetaldehyde from 2-deoxy-alpha-D-ribose 1-phosphate: step 2/2. In terms of biological role, catalyzes a reversible aldol reaction between acetaldehyde and D-glyceraldehyde 3-phosphate to generate 2-deoxy-D-ribose 5-phosphate. The protein is Deoxyribose-phosphate aldolase of Gloeobacter violaceus (strain ATCC 29082 / PCC 7421).